The chain runs to 296 residues: 4-hydroxy-tetrahydrodipicolinate synthase (296 aa).

T49 lines the pyruvate pocket. The active-site Proton donor/acceptor is the Y137. The active-site Schiff-base intermediate with substrate is the K166. Residue I208 participates in pyruvate binding.

The protein belongs to the DapA family. In terms of assembly, homotetramer; dimer of dimers.

Its subcellular location is the cytoplasm. The catalysed reaction is L-aspartate 4-semialdehyde + pyruvate = (2S,4S)-4-hydroxy-2,3,4,5-tetrahydrodipicolinate + H2O + H(+). It functions in the pathway amino-acid biosynthesis; L-lysine biosynthesis via DAP pathway; (S)-tetrahydrodipicolinate from L-aspartate: step 3/4. Its function is as follows. Catalyzes the condensation of (S)-aspartate-beta-semialdehyde [(S)-ASA] and pyruvate to 4-hydroxy-tetrahydrodipicolinate (HTPA). The chain is 4-hydroxy-tetrahydrodipicolinate synthase from Chlorobaculum parvum (strain DSM 263 / NCIMB 8327) (Chlorobium vibrioforme subsp. thiosulfatophilum).